Consider the following 250-residue polypeptide: MSSDTKKPLPYQRILLKLSGEALMGEGKYGIHPPTLMGIAEEVIELAQAGVEVALVIGGGNIFRGVAGATEGMDRASADYMGMLATCINSMAMQDALEKKGLHTRVLSAIKMEQIAEPYIRRRAVRHLEKGRVVIFAAGTGNPYFTTDTAASLRAMEINAQVILKATKVDGVYSADPKKDPTARRYRSLTYMDVLKQNLNVMDSTAISLCMDNKLPIIVFDLTQRGNIRRAVLGEGDIGTLVGGSETVWA.

Residue 17 to 20 participates in ATP binding; sequence KLSG. Gly-59 lines the UMP pocket. 2 residues coordinate ATP: Gly-60 and Arg-64. UMP contacts are provided by residues Asp-79 and 140-147; that span reads TGNPYFTT. Thr-167, Tyr-173, and Asp-176 together coordinate ATP.

The protein belongs to the UMP kinase family. In terms of assembly, homohexamer.

The protein resides in the cytoplasm. The enzyme catalyses UMP + ATP = UDP + ADP. It functions in the pathway pyrimidine metabolism; CTP biosynthesis via de novo pathway; UDP from UMP (UMPK route): step 1/1. Inhibited by UTP. Its function is as follows. Catalyzes the reversible phosphorylation of UMP to UDP. The chain is Uridylate kinase from Myxococcus xanthus (strain DK1622).